Here is a 473-residue protein sequence, read N- to C-terminus: GTPase Der (473 aa).

EngA-type G domains lie at 5-170 and 178-351; these read PVVA…PNQE and LKLA…QSSM. GTP contacts are provided by residues 11-18, 58-62, 123-126, 184-191, 231-235, and 296-299; these read GRPNVGKS, DTGGI, NKVD, DTAGV, and NKWD. One can recognise a KH-like domain in the interval 352–436; it reads FEVSTNRLTQ…PLNVVFKLNE (85 aa). Over residues 438–454 the composition is skewed to polar residues; sequence PYANKSDTPTKAKTQQL. The interval 438–473 is disordered; the sequence is PYANKSDTPTKAKTQQLRQRERNRAQKFTTKDKKPR. Over residues 455 to 473 the composition is skewed to basic and acidic residues; that stretch reads RQRERNRAQKFTTKDKKPR.

Belongs to the TRAFAC class TrmE-Era-EngA-EngB-Septin-like GTPase superfamily. EngA (Der) GTPase family. Associates with the 50S ribosomal subunit.

In terms of biological role, GTPase that plays an essential role in the late steps of ribosome biogenesis. This is GTPase Der from Psychrobacter arcticus (strain DSM 17307 / VKM B-2377 / 273-4).